We begin with the raw amino-acid sequence, 149 residues long: Ribonuclease pancreatic (149 aa).

The signal sequence occupies residues 1-25 (MGLEKSFILFSLLVLVLGWVQPSLS). Residues 30 to 40 (ADKFKRQHMDT) show a composition bias toward basic and acidic residues. The tract at residues 30–49 (ADKFKRQHMDTEGSSNSSPT) is disordered. 2 residues coordinate substrate: Lys32 and Arg35. Residue His37 is the Proton acceptor of the active site. Intrachain disulfides connect Cys51-Cys109, Cys65-Cys120, Cys83-Cys135, and Cys90-Cys97. A glycan (N-linked (GlcNAc...) asparagine) is linked at Asn62. 66–70 (KPVNT) provides a ligand contact to substrate. An N-linked (GlcNAc...) asparagine glycan is attached at Asn87. 2 residues coordinate substrate: Lys91 and Arg110. The Proton donor role is filled by His144.

The protein belongs to the pancreatic ribonuclease family. In terms of assembly, monomer. Interacts with and forms tight 1:1 complexes with RNH1. Dimerization of two such complexes may occur. Interaction with RNH1 inhibits this protein. In terms of tissue distribution, pancreas.

It is found in the secreted. It catalyses the reaction an [RNA] containing cytidine + H2O = an [RNA]-3'-cytidine-3'-phosphate + a 5'-hydroxy-ribonucleotide-3'-[RNA].. The catalysed reaction is an [RNA] containing uridine + H2O = an [RNA]-3'-uridine-3'-phosphate + a 5'-hydroxy-ribonucleotide-3'-[RNA].. In terms of biological role, endonuclease that catalyzes the cleavage of RNA on the 3' side of pyrimidine nucleotides. Acts on single-stranded and double-stranded RNA. The polypeptide is Ribonuclease pancreatic (RNASE1) (Niviventer cremoriventer (Dark-tailed tree rat)).